The sequence spans 346 residues: Methionine import ATP-binding protein MetN (346 aa).

Positions 2-243 constitute an ABC transporter domain; the sequence is VRFEGISKTY…PKHPITQSFL (242 aa). 40 to 47 is an ATP binding site; the sequence is GRSGAGKS.

It belongs to the ABC transporter superfamily. Methionine importer (TC 3.A.1.24) family. In terms of assembly, the complex is composed of two ATP-binding proteins (MetN), two transmembrane proteins (MetI) and a solute-binding protein (MetQ).

It localises to the cell inner membrane. It catalyses the reaction L-methionine(out) + ATP + H2O = L-methionine(in) + ADP + phosphate + H(+). The catalysed reaction is D-methionine(out) + ATP + H2O = D-methionine(in) + ADP + phosphate + H(+). Its function is as follows. Part of the ABC transporter complex MetNIQ involved in methionine import. Responsible for energy coupling to the transport system. The sequence is that of Methionine import ATP-binding protein MetN from Bradyrhizobium diazoefficiens (strain JCM 10833 / BCRC 13528 / IAM 13628 / NBRC 14792 / USDA 110).